Reading from the N-terminus, the 568-residue chain is Pyruvate carboxylase subunit B (568 aa).

A Pyruvate carboxyltransferase domain is found at 4 to 264 (IKVVETAFRD…DTGLDLEILK (261 aa)). Residues 12–16 (RDAHQ) and Arg-83 contribute to the substrate site. Asp-13 serves as a coordination point for a divalent metal cation. Residues Lys-174, His-203, and His-205 each coordinate a divalent metal cation. Lys-174 is modified (N6-carboxylysine). Substrate is bound at residue Thr-339. The Biotinyl-binding domain maps to 493-568 (PEPVDVEGAV…ETGDIIMVIK (76 aa)). Lys-534 is subject to N6-biotinyllysine.

Heterooctamer of four A and four B subunits. Mg(2+) is required as a cofactor. The cofactor is Mn(2+). Co(2+) serves as cofactor.

The catalysed reaction is hydrogencarbonate + pyruvate + ATP = oxaloacetate + ADP + phosphate + H(+). With respect to regulation, inhibited by ADP and alpha-ketoglutarate. Its function is as follows. Pyruvate carboxylase catalyzes a 2-step reaction, involving the ATP-dependent carboxylation of the covalently attached biotin in the first step and the transfer of the carboxyl group to pyruvate in the second. This chain is Pyruvate carboxylase subunit B (pycB), found in Methanothermobacter thermautotrophicus (strain ATCC 29096 / DSM 1053 / JCM 10044 / NBRC 100330 / Delta H) (Methanobacterium thermoautotrophicum).